The primary structure comprises 271 residues: UPF0758 protein ACIAD3126 (271 aa).

The MPN domain occupies 120–242 (NLNSSRLVLD…TFSFAERALL (123 aa)). Zn(2+) is bound by residues His191, His193, and Asp204. The JAMM motif signature appears at 191-204 (HNHPFGKAEPSAAD).

It belongs to the UPF0758 family.

The chain is UPF0758 protein ACIAD3126 from Acinetobacter baylyi (strain ATCC 33305 / BD413 / ADP1).